The sequence spans 352 residues: 3-isopropylmalate dehydrogenase (352 aa).

The substrate site is built by R96, R106, R134, and D220. Positions 220, 244, and 248 each coordinate Mg(2+). 277 to 289 is an NAD(+) binding site; it reads GSAPDIAGKNLAN.

It belongs to the isocitrate and isopropylmalate dehydrogenases family. LeuB type 1 subfamily. Homodimer. The cofactor is Mg(2+). It depends on Mn(2+) as a cofactor.

The protein localises to the cytoplasm. The enzyme catalyses (2R,3S)-3-isopropylmalate + NAD(+) = 4-methyl-2-oxopentanoate + CO2 + NADH. The protein operates within amino-acid biosynthesis; L-leucine biosynthesis; L-leucine from 3-methyl-2-oxobutanoate: step 3/4. Its function is as follows. Catalyzes the oxidation of 3-carboxy-2-hydroxy-4-methylpentanoate (3-isopropylmalate) to 3-carboxy-4-methyl-2-oxopentanoate. The product decarboxylates to 4-methyl-2 oxopentanoate. In Desulfitobacterium hafniense (strain Y51), this protein is 3-isopropylmalate dehydrogenase.